The chain runs to 201 residues: 3-isopropylmalate dehydratase small subunit (201 aa).

Belongs to the LeuD family. LeuD type 1 subfamily. Heterodimer of LeuC and LeuD.

It carries out the reaction (2R,3S)-3-isopropylmalate = (2S)-2-isopropylmalate. The protein operates within amino-acid biosynthesis; L-leucine biosynthesis; L-leucine from 3-methyl-2-oxobutanoate: step 2/4. Functionally, catalyzes the isomerization between 2-isopropylmalate and 3-isopropylmalate, via the formation of 2-isopropylmaleate. This is 3-isopropylmalate dehydratase small subunit from Shigella flexneri serotype 5b (strain 8401).